The primary structure comprises 339 residues: uncharacterized protein (339 aa).

Positions 1 to 12 (MDIDLNNQTDNN) are enriched in polar residues. The tract at residues 1–30 (MDIDLNNQTDNNELIVEDTENPKNPNSTNI) is disordered.

This is an uncharacterized protein from Acanthamoeba polyphaga (Amoeba).